Reading from the N-terminus, the 3483-residue chain is Nonribosomal peptide synthetase Ao415 (3483 aa).

Positions 281–669 (TFKKLNETSN…DVHPLIKDVV (389 aa)) are adenylation 1. The region spanning 775–851 (EVFDELSTKI…GLRDHVSGKK (77 aa)) is the Carrier 1 domain. Position 812 is an O-(pantetheine 4'-phosphoryl)serine (serine 812). Residues 886-1297 (ANVLPCSPMQ…YCLLHMLQNQ (412 aa)) form a condensation 1 region. Residues 1363–1758 (TYRQFDDMGN…SADKDVAEIV (396 aa)) are adenylation 2. One can recognise a Carrier 2 domain in the interval 1865–1941 (EELSETEKVI…SLAKALSSAN (77 aa)). Serine 1901 carries the post-translational modification O-(pantetheine 4'-phosphoryl)serine. The interval 1981–2379 (IKPCTPLQEG…LLKNPEQEVA (399 aa)) is condensation 2. The 74-residue stretch at 2412 to 2485 (TEAAVSIRRE…RMVVYLSSTK (74 aa)) folds into the Carrier 3 domain. Serine 2446 is subject to O-(pantetheine 4'-phosphoryl)serine. Residues 2520 to 2917 (ESILPTTPLQ…MLQKIIGNPL (398 aa)) form a condensation 3 region. In terms of domain architecture, Carrier 4 spans 2954 to 3030 (DNYQNLERQV…KICLFLDKKQ (77 aa)). At serine 2991 the chain carries O-(pantetheine 4'-phosphoryl)serine. The segment at 3084 to 3368 (SEGRIFLPTF…VQEDLLKIST (285 aa)) is condensation 4.

The protein belongs to the NRP synthetase family.

It participates in siderophore biosynthesis. In terms of biological role, nonribosomal peptide synthetase; part of the gene cluster that mediates the biosynthesis of desferriferrichrome that chelates Fe(3+) to form ferrichrome. Fe(3+) is a key factor for induction of trap formation and the fungus uses the iron chelating desferriferrichrome to sequester Fe(3+) to inhibit trap formation and increase nematicidal activity. The biosynthesis of desferriferrichrome requires the action of the L-ornithine N(5)-oxygenase (LOO) Ao414 that hydroxylates L-ornithine at N(5), resulting in the formation of N(5)-hydroxyl-L-ornithine, which is subsequently N-acetylated to yield N(5)-acetyl-N(5)-hydroxy-L-ornithine (L-AHO). L-AHO harbors one hydroxamate moiety, which is the key core responsible for chelating iron. Then, L-AHO is further condensated with glycines to form desferriferrichrome through the NRPS protein Ao415. The sequence is that of Nonribosomal peptide synthetase Ao415 from Arthrobotrys oligospora (strain ATCC 24927 / CBS 115.81 / DSM 1491) (Nematode-trapping fungus).